Reading from the N-terminus, the 149-residue chain is UPF0336 protein Lxx02810 (149 aa).

Belongs to the UPF0336 family.

In Leifsonia xyli subsp. xyli (strain CTCB07), this protein is UPF0336 protein Lxx02810.